The sequence spans 528 residues: Glutamyl-tRNA(Gln) amidotransferase subunit A, mitochondrial (528 aa).

K76 serves as the catalytic Charge relay system. A disordered region spans residues Y148–I167. S171 serves as the catalytic Charge relay system. S195 (acyl-ester intermediate) is an active-site residue.

Belongs to the amidase family. GatA subfamily. Subunit of the heterotrimeric GatCAB amidotransferase (AdT) complex, composed of A (QRSL1), B (GATB) and C (GATC) subunits.

The protein resides in the mitochondrion. The enzyme catalyses L-glutamyl-tRNA(Gln) + L-glutamine + ATP + H2O = L-glutaminyl-tRNA(Gln) + L-glutamate + ADP + phosphate + H(+). Allows the formation of correctly charged Gln-tRNA(Gln) through the transamidation of misacylated Glu-tRNA(Gln) in the mitochondria. The reaction takes place in the presence of glutamine and ATP through an activated gamma-phospho-Glu-tRNA(Gln). The polypeptide is Glutamyl-tRNA(Gln) amidotransferase subunit A, mitochondrial (Homo sapiens (Human)).